The sequence spans 276 residues: Small ribosomal subunit protein uS2 (276 aa).

Residues 255-276 (ASATATAAPTEAGAPEPTTDPS) form a disordered region.

Belongs to the universal ribosomal protein uS2 family.

In Mycolicibacterium paratuberculosis (strain ATCC BAA-968 / K-10) (Mycobacterium paratuberculosis), this protein is Small ribosomal subunit protein uS2.